Consider the following 513-residue polypeptide: Zinc finger protein RFP (513 aa).

An RING-type zinc finger spans residues 16-57 (CPVCLQYFAEPMMLDCGHNICCACLARCWGTAETNVSCPQCR). 4 residues coordinate Zn(2+): cysteine 96, histidine 99, cysteine 118, and histidine 124. The segment at 96-127 (CEKHREPLKLYCEEDQMPICVVCDRSREHRGH) adopts a B box-type zinc-finger fold. 2 coiled-coil regions span residues 132 to 172 (LEEA…AELL) and 282 to 311 (QKCL…LREA). Positions 298-492 (MQSDMEKIQE…SAAPLIICPM (195 aa)) constitute a B30.2/SPRY domain.

Belongs to the TRIM/RBCC family. In terms of assembly, homomultimerizes. Part of a complex consisting of TRIM27, USP7 and MAGEL2; directly interacts with USP7. Interacts with PML, EIF3S6, EPC1, CHD4 and EID1. Interacts with MAGED4, MAGEF1 and MAGEL2. Interacts with PTPN11. Interacts with autophagy receptor p62/SQSTM1. As to quaternary structure, (Microbial infection) Interacts with M.tuberculosis PtpA, whick blocks TRIM27-promoted JNK/p38 MAPK pathway activation and cell apoptosis. (Microbial infection) Interacts with herpes simplex virus protein ICP0. In terms of tissue distribution, expressed in testis namely within the seminiferous tubules.

The protein resides in the nucleus. The protein localises to the cytoplasm. It localises to the PML body. It is found in the early endosome. Its subcellular location is the mitochondrion. It catalyses the reaction S-ubiquitinyl-[E2 ubiquitin-conjugating enzyme]-L-cysteine + [acceptor protein]-L-lysine = [E2 ubiquitin-conjugating enzyme]-L-cysteine + N(6)-ubiquitinyl-[acceptor protein]-L-lysine.. Its pathway is protein modification; protein ubiquitination. In terms of biological role, E3 ubiquitin-protein ligase that mediates ubiquitination of various substrates and thereby plays a role in diffent processes including proliferation, innate immunity, apoptosis, immune response or autophagy. Ubiquitinates PIK3C2B and inhibits its activity by mediating the formation of 'Lys-48'-linked polyubiquitin chains; the function inhibits CD4 T-cell activation. Acts as a regulator of retrograde transport: together with MAGEL2, mediates the formation of 'Lys-63'-linked polyubiquitin chains at 'Lys-220' of WASHC1, leading to promote endosomal F-actin assembly. Has a transcriptional repressor activity by cooperating with EPC1. Induces apoptosis by activating Jun N-terminal kinase and p38 kinase and also increases caspase-3-like activity independently of mitochondrial events. May function in male germ cell development. Has DNA-binding activity and preferentially bound to double-stranded DNA. Forms a complex with and ubiquitinates the ubiquitin-specific protease USP7, which in turn deubiquitinates RIPK1 resulting in the positive regulation of TNF-alpha-induced apoptosis. In addition, acts with USP7 or PTPN11 as an inhibitor of the antiviral signaling pathway by promoting kinase TBK1 ubiquitination and degradation. Acts as a negative regulator of NOD2 signaling by mediating ubiquitination of NOD2, promoting its degradation by the proteasome. Alternatively, facilitates mitophagy via stabilization of active TBK1. Negatively regulates autophagy flux under basal conditions by directly polyubiquitinating ULK1. During starvation-induced autophagy, catalyzes non-degradative ubiquitination of the kinase STK38L promoting its activation and phosphorylation of ULK1 leading to its ubiquitination and degradation to restrain the amplitude and duration of autophagy. Functionally, (Microbial infection) Positively regulates hepatitis C virus replication by suppressing type I IFN response during infection. This is Zinc finger protein RFP from Homo sapiens (Human).